We begin with the raw amino-acid sequence, 4043 residues long: Polyketide synthase-nonribosomal peptide synthetase (4043 aa).

One can recognise a Ketosynthase family 3 (KS3) domain in the interval 8–446 (SEPIAIIGTG…GANSHAILES (439 aa)). Catalysis depends on for beta-ketoacyl synthase activity residues cysteine 181, histidine 320, and histidine 366. The interval 557 to 877 (VFTGQGAQWA…SRGNSDVEAF (321 aa)) is acyl transferase. The N-terminal hotdog fold stretch occupies residues 944 to 1078 (NELLGRQVLD…CRLRITVGDS (135 aa)). One can recognise a PKS/mFAS DH domain in the interval 944–1246 (NELLGRQVLD…TQPLSSPTEA (303 aa)). Residues 945-1243 (ELLGRQVLDG…GLQTQPLSSP (299 aa)) are dehydratase (DH) domain. Residue histidine 976 is the Proton acceptor; for dehydratase activity of the active site. Positions 1093 to 1246 (LLEVESDRFY…TQPLSSPTEA (154 aa)) are C-terminal hotdog fold. Aspartate 1154 serves as the catalytic Proton donor; for dehydratase activity. The segment at 1400-1585 (RYTKYLAAMA…GIETAIPHHD (186 aa)) is methyltransferase (MT) domain. Residues 2115–2288 (TYWLVGLTGG…NASAVHIGAI (174 aa)) form a ketoreductase (KR)domain region. The Carrier 1 domain occupies 2394-2475 (SSSADIYDII…EMVTQAQELL (82 aa)). The peptidyl carrier protein stretch occupies residues 2395–2472 (SSADIYDIIS…TVGEMVTQAQ (78 aa)). At serine 2435 the chain carries O-(pantetheine 4'-phosphoryl)serine. Disordered stretches follow at residues 2476–2575 (PKEL…DPSR) and 2587–2630 (EKHL…SQII). Composition is skewed to polar residues over residues 2494–2512 (PKNTVQPKQQTKKTIQLQN) and 2520–2534 (ALSQQVSSGVQNMIK). The segment covering 2537–2550 (PPKEAEAKQPRPEV) has biased composition (basic and acidic residues). Residues 2617-2627 (TSSSSSSTSAS) show a composition bias toward low complexity. Residues 2640–3069 (KSVPMAFGQS…NPALRLNVPP (430 aa)) are condensation. The segment at 3102–3502 (EIVERYPTHV…EGNLILGGRI (401 aa)) is adenylation. A Carrier 2 domain is found at 3617 to 3697 (TDESPSMAKM…GMVSLIDHSE (81 aa)). The interval 3622–3694 (SMAKMRDVWA…SLTGMVSLID (73 aa)) is thiolation. Serine 3657 is subject to O-(pantetheine 4'-phosphoryl)serine. The reductase-like stretch occupies residues 3735 to 3954 (LTGATGFLGR…DFVSADRVAM (220 aa)).

In the C-terminal section; belongs to the NRP synthetase family.

It functions in the pathway mycotoxin biosynthesis. Functionally, hybrid PKS-NRPS synthetase; part of the gene cluster that mediates the biosynthesis of the mycotoxins cytochalasins E and K. The hybrid PKS-NRPS synthetase ccsA and the enoyl reductase ccsC are responsible for fusion of phenylalanine with an octaketide backbone and subsequent release of the stable tetramic acid precursor. The polyketide synthase module (PKS) of the PKS-NRPS ccsA is responsible for the synthesis of the octaketide backbone. The downstream nonribosomal peptide synthetase (NRPS) amidates the carboxyl end of the octaketide with a phenylalanine. A reductase-like domain (R) at the C-terminus catalyzes the reductive release of the polyketide-amino acid intermediate. Because ccsA lacks a designated enoylreductase (ER) domain, the required activity is provided the enoyl reductase ccsC. Upon formation of the 11-membered carbocycle-fused perhydroisoindolone intermediate, a number of oxidative steps are required to afford the final cytochalasin E and K, including two hydroxylations at C17 and C18, one alcohol oxidation at C17, one epoxidation at C6 and C7 and two Baeyer-Villiger oxidations. The oxidative modification at C17, C18 and the C6-C7 epoxidation are likely to be catalyzed by the two cytochrome P450 oxygenases ccsD and ccsG. CcsD may be responsible for the epoxidation of the C6-C7 double bond. CcsG may be responsible for the successive oxidative modifications at C17 and C18. The double Baeyer-Villiger oxidations of ketocytochalasin to precytochalasin and cytochalasin Z(16) are among the final steps leading to cytochalasin E and K and are catalyzed by ccsB. The first oxygen insertion step follows that of the classic BVMO mechanism, generating the ester precytochalasin. Release of precytochalasin into an aqueous environment can generate the shunt product iso-precytochalasin through spontaneous isomerization. Alternatively, precytochalasin can undergo further oxidation by ccsB to yield the in-line carbonate-containing cytochalasin Z(16). Cytochalasin Z(16) is a precursor to cytochalasin E and cytochalasin K, whereas iso-precytochalasin is a precursor to cytochalasin Z(17) and rosellichalasin. The hydrolyase ccsE may catalyze hydrolysis of epoxide bond in cytochalasin E to afford cytochalasin K. The function of ccsF has not been assigned but it may play a role in post-PKS-NRPS biosynthetic step, resistance or transport of cytochalasins and related PKS-NRPS products. This is Polyketide synthase-nonribosomal peptide synthetase from Aspergillus clavatus (strain ATCC 1007 / CBS 513.65 / DSM 816 / NCTC 3887 / NRRL 1 / QM 1276 / 107).